The sequence spans 1985 residues: Non-reducing polyketide synthase ntnG (1985 aa).

Residues leucine 7–histidine 243 are N-terminal acylcarrier protein transacylase (SAT) domain. The 429-residue stretch at serine 364–glutamate 792 folds into the Ketosynthase family 3 (KS3) domain. Catalysis depends on for beta-ketoacyl synthase activity residues cysteine 536, histidine 671, and histidine 711. The tract at residues valine 889–cysteine 1148 is malonyl-CoA:ACP transacylase (MAT) domain. Residue serine 980 is the For acyl/malonyl transferase activity of the active site. An N-terminal hotdog fold region spans residues histidine 1261–aspartate 1392. The PKS/mFAS DH domain maps to histidine 1261–histidine 1567. Positions lysine 1265–leucine 1566 are product template (PT) domain. The Proton acceptor; for dehydratase activity role is filled by histidine 1293. A C-terminal hotdog fold region spans residues alanine 1414–histidine 1567. Catalysis depends on aspartate 1479, which acts as the Proton donor; for dehydratase activity. Positions asparagine 1578 to proline 1605 are enriched in polar residues. Positions asparagine 1578–serine 1622 are disordered. One can recognise a Carrier domain in the interval serine 1622–glutamate 1699. At serine 1659 the chain carries O-(pantetheine 4'-phosphoryl)serine. The segment at threonine 1719 to lysine 1913 is thioesterase (TE) domain.

Its pathway is secondary metabolite biosynthesis; terpenoid biosynthesis. Its function is as follows. Non-reducing polyketide synthase; part of the gene cluster that mediates the biosynthesis of the meroterpenoids nectripenoids A and B, as well as cochliquninone D and isocochliquninone E. The pathway probably begins with the HR-PKS ntnH that catalyzes two chain-extension steps to form a reduced triketide, which then primes the SAT domain in the NR-PKS ntnG to initiate three more cycles of extension to give a linear hexaketide corresponding to the polyketide part of nectripenoids. The FAD-dependent monooxygenase ntnJ then performs an oxidative decarboxylation at C11 of the ntnH/ntnG product, via an electrophilic aromatic hydroxylation with concomitant ipso-decarboxylation. The membrane-bound polyprenyl transferase ntnF then introduces a farnesyl group before the FAD-dependent monooxygenase ntnK functions as the first epoxidase on terminal C12'-C13' olefin, followed by a second epoxidation on C7'-C8' catalyzed by ntnA. The terpene cyclase/mutase ntnI then initiates the sequential tricyclic ring formation through protonation of the terminal epoxide and catalyzes the regioselective and stereoselective 6/6/6-tricyclic ring formation. The cytochrome P450 monooxygenase ntnM may then hydroxylate C1'. In Nectria sp, this protein is Non-reducing polyketide synthase ntnG.